We begin with the raw amino-acid sequence, 274 residues long: Protein YehF (274 aa).

One can recognise a WGR domain in the interval 2 to 78 (RHFIYQDEKS…KDNSLQPSQT (77 aa)).

Functionally, has been implicated in selenate reduction; a mini-Tn10 insertion mutant in 'molR', (which was mapped to 47.3 centisomes i.e. this locus), is defective in the reduction of selenate. This chain is Protein YehF (yehF), found in Escherichia coli (strain K12).